The following is a 129-amino-acid chain: Small ribosomal subunit protein uS11 (129 aa).

This sequence belongs to the universal ribosomal protein uS11 family. Part of the 30S ribosomal subunit. Interacts with proteins S7 and S18. Binds to IF-3.

Its function is as follows. Located on the platform of the 30S subunit, it bridges several disparate RNA helices of the 16S rRNA. Forms part of the Shine-Dalgarno cleft in the 70S ribosome. This Caulobacter vibrioides (strain ATCC 19089 / CIP 103742 / CB 15) (Caulobacter crescentus) protein is Small ribosomal subunit protein uS11.